The sequence spans 245 residues: Heat shock transcription factor (245 aa).

Residues 17-115 (KSGFVNRLYR…LISLITRDKS (99 aa)) mediate DNA binding. The segment at 130 to 169 (SLQYLASCNYKQQKEINDLKDRIKTLETKYATLYEIISNA) is involved in trimerization.

Belongs to the HSF family. In terms of assembly, homotrimer. Homotrimerization increases the affinity of HSF1 to DNA.

It is found in the nucleus. In terms of biological role, DNA-binding transcription factor that specifically binds heat shock promoter elements (HSE) and activates transcription. This chain is Heat shock transcription factor, found in Enterocytozoon bieneusi (strain H348) (Microsporidian parasite).